We begin with the raw amino-acid sequence, 307 residues long: Nucleotide-binding protein ACP_0619 (307 aa).

Basic and acidic residues predominate over residues Met-1–Ala-14. The interval Met-1 to Pro-23 is disordered. Gly-33–Gly-40 is an ATP binding site. Asp-83–Glu-86 contributes to the GTP binding site.

Belongs to the RapZ-like family.

In terms of biological role, displays ATPase and GTPase activities. The polypeptide is Nucleotide-binding protein ACP_0619 (Acidobacterium capsulatum (strain ATCC 51196 / DSM 11244 / BCRC 80197 / JCM 7670 / NBRC 15755 / NCIMB 13165 / 161)).